The chain runs to 96 residues: Aspartyl/glutamyl-tRNA(Asn/Gln) amidotransferase subunit C (96 aa).

This sequence belongs to the GatC family. Heterotrimer of A, B and C subunits.

The catalysed reaction is L-glutamyl-tRNA(Gln) + L-glutamine + ATP + H2O = L-glutaminyl-tRNA(Gln) + L-glutamate + ADP + phosphate + H(+). The enzyme catalyses L-aspartyl-tRNA(Asn) + L-glutamine + ATP + H2O = L-asparaginyl-tRNA(Asn) + L-glutamate + ADP + phosphate + 2 H(+). In terms of biological role, allows the formation of correctly charged Asn-tRNA(Asn) or Gln-tRNA(Gln) through the transamidation of misacylated Asp-tRNA(Asn) or Glu-tRNA(Gln) in organisms which lack either or both of asparaginyl-tRNA or glutaminyl-tRNA synthetases. The reaction takes place in the presence of glutamine and ATP through an activated phospho-Asp-tRNA(Asn) or phospho-Glu-tRNA(Gln). The polypeptide is Aspartyl/glutamyl-tRNA(Asn/Gln) amidotransferase subunit C (Aliarcobacter butzleri (strain RM4018) (Arcobacter butzleri)).